The following is a 190-amino-acid chain: Potassium-transporting ATPase KdpC subunit (190 aa).

A helical membrane pass occupies residues 13–33 (IGFLLLTLVCGVLYPGVVTVF).

It belongs to the KdpC family. As to quaternary structure, the system is composed of three essential subunits: KdpA, KdpB and KdpC.

The protein resides in the cell membrane. In terms of biological role, part of the high-affinity ATP-driven potassium transport (or Kdp) system, which catalyzes the hydrolysis of ATP coupled with the electrogenic transport of potassium into the cytoplasm. This subunit acts as a catalytic chaperone that increases the ATP-binding affinity of the ATP-hydrolyzing subunit KdpB by the formation of a transient KdpB/KdpC/ATP ternary complex. This chain is Potassium-transporting ATPase KdpC subunit, found in Listeria monocytogenes serovar 1/2a (strain ATCC BAA-679 / EGD-e).